The following is a 420-amino-acid chain: MDKIVIKGGQALHGEVQASGAKNAALPILASALLADGTSTYRNVPALADVATMLKVLRTMGCDAERDSETTDVCRVGVNGHITPEAPYDLVKTMRASVLVLGPLVARFGRARVSMPGGCAIGARPIDQHLKGLKALGADIHLTEGYVEATAKQLKGGTVNFDVITVTGTENVMMAAVLAKGRTLMENCAREPEVEELAKVLNKMGARIEGAGTSSITIEGVDGLKPVEHAILPDRIEAGTLLVAAAISGGDVLVKRVVPEHMDALVEKLREAGCTITTEGSGLRCKAPQRLDAVNITTTEHPGFPTDMQAQLMALMSVSQGTSVISENIFENRFMHVPELHRLGADITIQGPTAVVKGVKGLSGAPVMATDLRASASLILAGLRAEGRTDVSRVYHLDRGYERLERKLSALGADIRREKA.

22–23 is a phosphoenolpyruvate binding site; sequence KN. Position 95 (Arg-95) interacts with UDP-N-acetyl-alpha-D-glucosamine. Residue Cys-119 is the Proton donor of the active site. A 2-(S-cysteinyl)pyruvic acid O-phosphothioketal modification is found at Cys-119. Residues 124-128, Asp-307, and Ile-329 each bind UDP-N-acetyl-alpha-D-glucosamine; that span reads RPIDQ.

The protein belongs to the EPSP synthase family. MurA subfamily.

The protein localises to the cytoplasm. It carries out the reaction phosphoenolpyruvate + UDP-N-acetyl-alpha-D-glucosamine = UDP-N-acetyl-3-O-(1-carboxyvinyl)-alpha-D-glucosamine + phosphate. It participates in cell wall biogenesis; peptidoglycan biosynthesis. Functionally, cell wall formation. Adds enolpyruvyl to UDP-N-acetylglucosamine. The polypeptide is UDP-N-acetylglucosamine 1-carboxyvinyltransferase (Myxococcus xanthus (strain DK1622)).